The chain runs to 230 residues: 2-C-methyl-D-erythritol 4-phosphate cytidylyltransferase (230 aa).

This sequence belongs to the IspD/TarI cytidylyltransferase family. IspD subfamily.

It catalyses the reaction 2-C-methyl-D-erythritol 4-phosphate + CTP + H(+) = 4-CDP-2-C-methyl-D-erythritol + diphosphate. It participates in isoprenoid biosynthesis; isopentenyl diphosphate biosynthesis via DXP pathway; isopentenyl diphosphate from 1-deoxy-D-xylulose 5-phosphate: step 2/6. In terms of biological role, catalyzes the formation of 4-diphosphocytidyl-2-C-methyl-D-erythritol from CTP and 2-C-methyl-D-erythritol 4-phosphate (MEP). This is 2-C-methyl-D-erythritol 4-phosphate cytidylyltransferase from Nocardia farcinica (strain IFM 10152).